The sequence spans 552 residues: Acyl-CoA synthetase FUM10 (552 aa).

183–194 (ELFTSGTTGAPK) lines the AMP pocket. The AMP-binding stretch occupies residues 463-536 (EIEHVARLHD…QEIPYNRTGK (74 aa)).

This sequence belongs to the ATP-dependent AMP-binding enzyme family.

Its pathway is mycotoxin biosynthesis. Acyl-CoA synthetase; part of the gene cluster that mediates the biosynthesis of fumonisins B1 (FB1), B2 (FB2), B3 (FB3), and B4 (FB4), which are carcinogenic mycotoxins. Within the pathway, FUM10 is involved the addition of the tricarballylic moieties to the carbon backbone. FUM10 catalyzes the CoA activation of citrate to form tricarballylic acid. The biosynthesis starts with the FUM1-catalyzed carbon chain assembly from one molecule of acetyl-CoA, eight molecules of malonyl-CoA, and two molecules of methionine (in S-adenosyl form). The C18 polyketide chain is released from the enzyme by a nucleophilic attack of a carbanion, which is derived from R-carbon of alanine by decarboxylation, on the carbonyl carbon of polyketide acyl chain. This step is catalyzed by the pyridoxal 5'-phosphate-dependent aminoacyl transferase FUM8. The resultant 3-keto intermediate is then stereospecifically reduced to a 3-hydroxyl product by reductase FUM13. Subsequent oxidations at C-10 by the cytochrome P450 monooxygenase FUM2, C-14 and C-15 by FUM6, FUM12 or FUM15, tricarballylic esterification of the hydroxyl groups on C-14 and C-15 by acyltransferase FUM14, and C-5 hydroxylation by 2-keto-glutarate-dependent dioxygenase FUM3 furnish the biosynthesis of fumonisins. The tricarballylic moieties are most likely derived from the citric acid cycle, and their addition to the carbon backbone may involve FUM7, FUM10, FUM11 and FUM14. This is Acyl-CoA synthetase FUM10 from Gibberella moniliformis (strain M3125 / FGSC 7600) (Maize ear and stalk rot fungus).